A 548-amino-acid polypeptide reads, in one-letter code: Membrane protein insertase YidC (548 aa).

A helical membrane pass occupies residues 6 to 26; sequence NLLVIALLFVSFMIWQAWEQD. The segment at 28–58 is disordered; it reads NPQPQQQQTTQTTTTAAGSAADQGVPASGQG. Low complexity predominate over residues 29–42; that stretch reads PQPQQQQTTQTTTT. Transmembrane regions (helical) follow at residues 350–370, 420–440, 458–478, and 499–519; these read FLGN…GIMY, LGGC…YYML, LSAQ…MFFI, and PVIF…YYIV.

This sequence belongs to the OXA1/ALB3/YidC family. Type 1 subfamily. As to quaternary structure, interacts with the Sec translocase complex via SecD. Specifically interacts with transmembrane segments of nascent integral membrane proteins during membrane integration.

The protein resides in the cell inner membrane. Required for the insertion and/or proper folding and/or complex formation of integral membrane proteins into the membrane. Involved in integration of membrane proteins that insert both dependently and independently of the Sec translocase complex, as well as at least some lipoproteins. Aids folding of multispanning membrane proteins. This chain is Membrane protein insertase YidC, found in Enterobacter sp. (strain 638).